The following is a 553-amino-acid chain: Phospholipase B-like 1 (553 aa).

Positions 1–38 are cleaved as a signal peptide; it reads MTRGGPGGRPGLPQPPPLLLLLLLLPLLLVTAEPPKPA. Residue Asn71 is glycosylated (N-linked (GlcNAc...) (high mannose) asparagine; alternate). Asn71 carries N-linked (GlcNAc...) (hybrid) asparagine; alternate glycosylation. Positions 209–227 are cleaved as a propeptide — removed in mature form; the sequence is LSPTKNGSLKVFKRWDMGH. N-linked (GlcNAc...) (high mannose) asparagine; alternate glycosylation is found at Asn308 and Asn366. Asn308 and Asn366 each carry an N-linked (GlcNAc...) (hybrid) asparagine; alternate glycan. N-linked (GlcNAc...) asparagine glycosylation is present at Asn411. Intrachain disulfides connect Cys470–Cys475 and Cys474–Cys489. A glycan (N-linked (GlcNAc...) (high mannose) asparagine; alternate) is linked at Asn526. Asn526 carries an N-linked (GlcNAc...) (hybrid) asparagine; alternate glycan.

It belongs to the phospholipase B-like family. As to quaternary structure, may form a homodimer, each monomer is composed of a chain A and a chain B. In terms of processing, the maturation cleavages that produces chains A and B are required to open the putative substrate binding pocket. Both chains A and B remain associated in the mature protein. Expressed in neutrophils and monocytes.

Its subcellular location is the lysosome. Functionally, in view of the small size of the putative binding pocket, it has been proposed that it may act as an amidase or a peptidase. Exhibits a weak phospholipase activity, acting on various phospholipids, including phosphatidylcholine, phosphatidylinositol, phosphatidylethanolamine and lysophospholipids. This Homo sapiens (Human) protein is Phospholipase B-like 1 (PLBD1).